Reading from the N-terminus, the 541-residue chain is MAKEIKYGIEARKALEEGVNKLANTVRVTIGPKGRNVVLDKSYGAPLITNDGVTIAKDIELEDAFENMGAQLVKEVAAKTNDVAGDGTTTATVLAQAMINEGMKNLAAGANPIVLRKGMKKATDCAVEAIAGMSEKVTGKDQIAKVAAISAGDEEVGQMVADAMEKVSNDGVITIEESKTMKTELDLVEGMQFDRGYISAYMATDMDKMEAVLDNPYILITDKKISNIQEILPVLEQIVQSGAKLLIIAEDVEGEALTTLIVNKLRGTFNVVAVKAPGYGDRRKEMLKDIAILTGGQVISEELGLELKDTTMDMLGRAKSVKVQKENTVIVDGEGAKEDIDARVAQIKAQLEETTSEFDKEKLQERLAKLAGGVAVIRVGAATETEMKEAKLRMEDALNATRAAVEEGVVSGGGSAYIHASKKVAELVKTLSGDEKIGAQIILKALEAPLFHIAYNAGLEGAVIINKVRESEVGTGFDAYKEEYVNMIDAGILDPAKVTRSALQNATSVASTLLTTESVVANIKEDAPAMPAGGAGMGGMM.

ATP-binding positions include 29–32 (TIGP), 86–90 (DGTTT), glycine 413, and aspartate 494.

This sequence belongs to the chaperonin (HSP60) family. As to quaternary structure, forms a cylinder of 14 subunits composed of two heptameric rings stacked back-to-back. Interacts with the co-chaperonin GroES.

It localises to the cytoplasm. It carries out the reaction ATP + H2O + a folded polypeptide = ADP + phosphate + an unfolded polypeptide.. In terms of biological role, together with its co-chaperonin GroES, plays an essential role in assisting protein folding. The GroEL-GroES system forms a nano-cage that allows encapsulation of the non-native substrate proteins and provides a physical environment optimized to promote and accelerate protein folding. This Lachnospira eligens (strain ATCC 27750 / DSM 3376 / VPI C15-48 / C15-B4) (Eubacterium eligens) protein is Chaperonin GroEL.